Consider the following 313-residue polypeptide: Porphobilinogen deaminase (313 aa).

The residue at position 242 (Cys242) is an S-(dipyrrolylmethanemethyl)cysteine.

It belongs to the HMBS family. Monomer. Requires dipyrromethane as cofactor.

It catalyses the reaction 4 porphobilinogen + H2O = hydroxymethylbilane + 4 NH4(+). Its pathway is porphyrin-containing compound metabolism; protoporphyrin-IX biosynthesis; coproporphyrinogen-III from 5-aminolevulinate: step 2/4. Functionally, tetrapolymerization of the monopyrrole PBG into the hydroxymethylbilane pre-uroporphyrinogen in several discrete steps. The chain is Porphobilinogen deaminase (hemC) from Proteus mirabilis.